We begin with the raw amino-acid sequence, 606 residues long: MAESGGSSGSSQSPERPSSLADRNGALKCTFSAAGHSTGLLQGLAALRAQGQLLDVVLTVNSEAFHAHKVVLAACSDYFRAMFTGGMREANQAVIQLQGVSARGLRHIIDFAYSAEVTLDLDCVQDVLGAAVFLQMLPVVELCEDFLKAAMSVETCLHIGQMATTFSLTSLRESVDAFTFRHFLQIAAEEDFLRLPLERLVFFLQSNRLQSCAEIDLFRAAVRWLQHDPARRARASLVLRHVRFPLMQPAELVDSVQTLDVMLDDALCRQYLLEAFSYHVLPCRQHDMQSPRTAVRSDVASLVAFGGTPYTDSDRAVSSKVFQLPEPGARHFRELTEMELGCSHAGVAVLDNFVYVAGGQHLQHRSGEGAVDACYRYDPQRNRWLRLRALRESRVQFQLTALGGLLYATGGRNRAGSLASVERYCPRRDSWDFACPLKRRTWGHAGAAAAGRLYISGGYGVSAEDKKALQCYDPAADRWEPRAPMREPRVLHAMLGAAGRIYALGGRMDHVDRCFDVLAVEYYVPDADQWTSVTPMRAGQSEAGCCLLERKIYIVGGYNWRLNNVTGIVQVYNTETDEWERDLHFPESFAGIACAAVLLPRSGHGR.

A compositionally biased stretch (low complexity) spans 1 to 19; the sequence is MAESGGSSGSSQSPERPSS. The tract at residues 1-20 is disordered; sequence MAESGGSSGSSQSPERPSSL. N-acetylalanine is present on alanine 2. Residues 54–121 form the BTB domain; sequence LDVVLTVNSE…AYSAEVTLDL (68 aa). Residues 156 to 257 form the BACK domain; sequence CLHIGQMATT…QPAELVDSVQ (102 aa). Kelch repeat units lie at residues 301–352, 353–404, 406–451, 452–499, 501–550, and 552–599; these read SLVA…VLDN, FVYV…ALGG, LYAT…AAAG, RLYI…GAAG, IYAL…LLER, and IYIV…AVLL. Serine 430 bears the Phosphoserine mark.

In terms of biological role, may play a role in endo(sarco)plasmic reticulum (ER/SR) mitochondrial signaling. May be part of the ubiquitin-proteasome system (UPS) and affect ubiquitination and degradation of target substrates in cardiomyocytes. The sequence is that of Kelch-like protein 26 (Klhl26) from Mus musculus (Mouse).